The chain runs to 115 residues: NADH-ubiquinone oxidoreductase chain 3 (115 aa).

3 helical membrane-spanning segments follow: residues 3–23 (FVLA…ITFW), 55–75 (FFLV…LLPL), and 84–104 (LPLM…GLTY).

It belongs to the complex I subunit 3 family. As to quaternary structure, core subunit of respiratory chain NADH dehydrogenase (Complex I) which is composed of 45 different subunits. Interacts with TMEM186. Interacts with TMEM242.

Its subcellular location is the mitochondrion inner membrane. The catalysed reaction is a ubiquinone + NADH + 5 H(+)(in) = a ubiquinol + NAD(+) + 4 H(+)(out). In terms of biological role, core subunit of the mitochondrial membrane respiratory chain NADH dehydrogenase (Complex I) which catalyzes electron transfer from NADH through the respiratory chain, using ubiquinone as an electron acceptor. Essential for the catalytic activity of complex I. The sequence is that of NADH-ubiquinone oxidoreductase chain 3 from Pongo abelii (Sumatran orangutan).